Here is a 434-residue protein sequence, read N- to C-terminus: Probable proline transporter 2 (434 aa).

11 helical membrane passes run 26–46 (PWYQVGFVLTTGVNSAYVLGY), 49–69 (SVMVPLGWIGGTCGLILAAAI), 106–126 (LTWALQYVNLFMINTGFIILA), 149–169 (IALSGFVCALFAFGIPYLSAL), 171–191 (IWLGFSTFFSLIYITIAFVLS), 213–233 (IFTTIGAVANLVFAYNTGMLP), 251–271 (LWFQFTVGSLPLYAVTFMGYW), 297–317 (LSAFLQTVIALHIFASPMYEF), 339–359 (VGVRGGYLTVNTLVAAMLPFL), 362–382 (FMSLTGALSTFPLTFVLANHM), and 403–423 (VAGFSLLSIAAAVAALRLIMV).

Belongs to the amino acid/polyamine transporter 2 family. Amino acid/auxin permease (AAAP) (TC 2.A.18.3) subfamily.

The protein localises to the cell membrane. Proline transporter that mediates proline transport across the plasma membrane. The polypeptide is Probable proline transporter 2 (Oryza sativa subsp. japonica (Rice)).